Reading from the N-terminus, the 155-residue chain is Chaperone protein IpgC (155 aa).

It belongs to the LcrH/SycD chaperone family.

Its subcellular location is the cytoplasm. In terms of biological role, assists the correct folding of nascent IpaB. Once it is bound to IpaB, it binds to IpaC and impedes their premature association that would lead to their degradation in the absence of IpcG. The polypeptide is Chaperone protein IpgC (ipgC) (Shigella dysenteriae).